The chain runs to 139 residues: ATP synthase epsilon chain (139 aa).

It belongs to the ATPase epsilon chain family. F-type ATPases have 2 components, CF(1) - the catalytic core - and CF(0) - the membrane proton channel. CF(1) has five subunits: alpha(3), beta(3), gamma(1), delta(1), epsilon(1). CF(0) has three main subunits: a, b and c.

The protein localises to the cell inner membrane. Functionally, produces ATP from ADP in the presence of a proton gradient across the membrane. This chain is ATP synthase epsilon chain, found in Pseudomonas putida (strain W619).